A 178-amino-acid chain; its full sequence is Ribulose bisphosphate carboxylase small subunit, chloroplastic 4 (178 aa).

The transit peptide at 1–54 (MASISSTVATVSRAAPAQANMVAPFTGLKSNAAFPATKKANDFSTLPSNGGRVQ) directs the protein to the chloroplast.

The protein belongs to the RuBisCO small chain family. Heterohexadecamer of 8 large and 8 small subunits.

Its subcellular location is the plastid. The protein localises to the chloroplast. RuBisCO catalyzes two reactions: the carboxylation of D-ribulose 1,5-bisphosphate, the primary event in carbon dioxide fixation, as well as the oxidative fragmentation of the pentose substrate. Both reactions occur simultaneously and in competition at the same active site. Although the small subunit is not catalytic it is essential for maximal activity. This chain is Ribulose bisphosphate carboxylase small subunit, chloroplastic 4, found in Flaveria pringlei.